A 268-amino-acid polypeptide reads, in one-letter code: Calpain small subunit 1 (268 aa).

Position 1 is an N-acetylmethionine (M1). Phosphoserine is present on S6. Residues 96 to 130 (EEVRQFRKLFVQLAGDDMEVSATELMNILNKVVTR) enclose the EF-hand 1; atypical domain. Residues A109, D112, E114, E119, D137, D152, D154, T156, K158, and E163 each coordinate Ca(2+). EF-hand domains are found at residues 139 to 172 (FGID…NNIK), 169 to 204 (NNIK…AGFH), 205 to 233 (LNEH…ISCL), and 234 to 268 (VRLD…TMYS). K179 carries the N6-acetyllysine modification. Residues D182, D184, S186, T188, E193, and D225 each contribute to the Ca(2+) site.

As to quaternary structure, homodimer or heterodimer of a large (catalytic) and a small (regulatory) subunit. In presence of calcium, the heterodimer dissociates.

It is found in the cytoplasm. The protein localises to the cell membrane. In terms of biological role, regulatory subunit of the calcium-regulated non-lysosomal thiol-protease which catalyzes limited proteolysis of substrates involved in cytoskeletal remodeling and signal transduction. Essential for embryonic development. This Mus musculus (Mouse) protein is Calpain small subunit 1 (Capns1).